The chain runs to 69 residues: Large ribosomal subunit protein uL29 (69 aa).

The protein belongs to the universal ribosomal protein uL29 family.

The chain is Large ribosomal subunit protein uL29 from Synechococcus sp. (strain WH7803).